The following is a 360-amino-acid chain: Isopentenyl-diphosphate delta-isomerase (360 aa).

12–13 is a substrate binding site; it reads RK. Residues 69–71, S99, and N130 each bind FMN; that span reads SMT. Substrate is bound at residue 99 to 101; that stretch reads SQR. A substrate-binding site is contributed by Q164. E165 is a binding site for Mg(2+). FMN contacts are provided by residues K196, T226, 277-279, and 298-299; these read GVR and AK.

The protein belongs to the IPP isomerase type 2 family. Homooctamer. Dimer of tetramers. It depends on FMN as a cofactor. Requires NADPH as cofactor. Mg(2+) serves as cofactor.

It localises to the cytoplasm. It carries out the reaction isopentenyl diphosphate = dimethylallyl diphosphate. Functionally, involved in the biosynthesis of isoprenoids. Catalyzes the 1,3-allylic rearrangement of the homoallylic substrate isopentenyl (IPP) to its allylic isomer, dimethylallyl diphosphate (DMAPP). The chain is Isopentenyl-diphosphate delta-isomerase from Halobacterium salinarum (strain ATCC 700922 / JCM 11081 / NRC-1) (Halobacterium halobium).